The chain runs to 127 residues: Glycine cleavage system H protein (127 aa).

The 82-residue stretch at 24–105 (TALVGITDFA…YNEGWIVKMK (82 aa)) folds into the Lipoyl-binding domain. N6-lipoyllysine is present on K65.

The protein belongs to the GcvH family. The glycine cleavage system is composed of four proteins: P, T, L and H. Requires (R)-lipoate as cofactor.

In terms of biological role, the glycine cleavage system catalyzes the degradation of glycine. The H protein shuttles the methylamine group of glycine from the P protein to the T protein. This chain is Glycine cleavage system H protein, found in Chlorobaculum tepidum (strain ATCC 49652 / DSM 12025 / NBRC 103806 / TLS) (Chlorobium tepidum).